We begin with the raw amino-acid sequence, 351 residues long: ATP-dependent 6-phosphofructokinase subunit gamma (351 aa).

Heterododecamer of 4 alpha, 4 beta and 4 gamma chains. The gamma chain bridges the N-terminal halves of the alpha and beta subunits.

Its subcellular location is the cytoplasm. It functions in the pathway carbohydrate degradation; glycolysis; D-glyceraldehyde 3-phosphate and glycerone phosphate from D-glucose: step 3/4. In terms of biological role, structural subunit of pyrophosphate--fructose 6-phosphate 1-phosphotransferase. Not required for catalytic activity. Fine-tunes allosteric regulation of the ATP-PFK by ATP, fructose 2,6-bisphosphate and AMP. This chain is ATP-dependent 6-phosphofructokinase subunit gamma (PFK3), found in Komagataella phaffii (strain GS115 / ATCC 20864) (Yeast).